A 321-amino-acid polypeptide reads, in one-letter code: Annexin A5 (321 aa).

An N-acetylalanine modification is found at A2. Annexin repeat units lie at residues 15-86 (FDER…ALMK), 87-158 (PSRL…VLLQ), 170-242 (AQVE…AVVK), and 246-317 (SIPA…LLCG). Residue K29 forms a Glycyl lysine isopeptide (Lys-Gly) (interchain with G-Cter in SUMO1); alternate linkage. Residue K29 forms a Glycyl lysine isopeptide (Lys-Gly) (interchain with G-Cter in SUMO2); alternate linkage. N6-acetyllysine occurs at positions 70, 76, 79, 97, and 101. N6-succinyllysine is present on K290. Positions 314–320 (LLCGGED) match the [IL]-x-C-x-x-[DE] motif motif.

It belongs to the annexin family. As to quaternary structure, monomer. Binds ATRX and EIF5B. S-nitrosylation is induced by interferon-gamma and oxidatively-modified low-densitity lipoprotein (LDL(ox)) possibly implicating the iNOS-S100A8/9 transnitrosylase complex.

Functionally, this protein is an anticoagulant protein that acts as an indirect inhibitor of the thromboplastin-specific complex, which is involved in the blood coagulation cascade. The chain is Annexin A5 (ANXA5) from Bos taurus (Bovine).